Here is a 547-residue protein sequence, read N- to C-terminus: Chaperonin GroEL (547 aa).

ATP is bound by residues 30–33 (TLGP), lysine 51, 87–91 (DGTTT), glycine 415, 479–481 (NAA), and aspartate 495.

This sequence belongs to the chaperonin (HSP60) family. In terms of assembly, forms a cylinder of 14 subunits composed of two heptameric rings stacked back-to-back. Interacts with the co-chaperonin GroES.

It localises to the cytoplasm. The enzyme catalyses ATP + H2O + a folded polypeptide = ADP + phosphate + an unfolded polypeptide.. Together with its co-chaperonin GroES, plays an essential role in assisting protein folding. The GroEL-GroES system forms a nano-cage that allows encapsulation of the non-native substrate proteins and provides a physical environment optimized to promote and accelerate protein folding. This chain is Chaperonin GroEL, found in Cupriavidus taiwanensis (strain DSM 17343 / BCRC 17206 / CCUG 44338 / CIP 107171 / LMG 19424 / R1) (Ralstonia taiwanensis (strain LMG 19424)).